Reading from the N-terminus, the 366-residue chain is Pyruvate dehydrogenase E1 component subunit beta, mitochondrial (366 aa).

The transit peptide at 1 to 33 (MFSRLPTSLARNVARRAPTSFVRPSAAAAALRF) directs the protein to the mitochondrion. Thiamine diphosphate is bound at residue E95. K(+) is bound by residues A196, I197, D199, and N201.

As to quaternary structure, pyruvate dehydrogenase (E1) is a tetramer of 2 alpha and 2 beta subunits. Eukaryotic pyruvate dehydrogenase (PDH) complexes are organized as a core consisting of the oligomeric dihydrolipoamide acetyl-transferase (E2), around which are arranged multiple copies of pyruvate dehydrogenase (E1), dihydrolipoamide dehydrogenase (E3) and protein X (E3BP) bound by non-covalent bonds. Requires thiamine diphosphate as cofactor.

Its subcellular location is the mitochondrion matrix. It carries out the reaction N(6)-[(R)-lipoyl]-L-lysyl-[protein] + pyruvate + H(+) = N(6)-[(R)-S(8)-acetyldihydrolipoyl]-L-lysyl-[protein] + CO2. Its function is as follows. The pyruvate dehydrogenase complex catalyzes the overall conversion of pyruvate to acetyl-CoA and CO(2). In Saccharomyces cerevisiae (strain ATCC 204508 / S288c) (Baker's yeast), this protein is Pyruvate dehydrogenase E1 component subunit beta, mitochondrial (PDB1).